A 159-amino-acid chain; its full sequence is SsrA-binding protein (159 aa).

The span at 137–147 shows a compositional bias: basic and acidic residues; sequence LAERQANRETE. A disordered region spans residues 137–159; that stretch reads LAERQANRETEQAVGRRLKGMHD.

Belongs to the SmpB family.

It is found in the cytoplasm. In terms of biological role, required for rescue of stalled ribosomes mediated by trans-translation. Binds to transfer-messenger RNA (tmRNA), required for stable association of tmRNA with ribosomes. tmRNA and SmpB together mimic tRNA shape, replacing the anticodon stem-loop with SmpB. tmRNA is encoded by the ssrA gene; the 2 termini fold to resemble tRNA(Ala) and it encodes a 'tag peptide', a short internal open reading frame. During trans-translation Ala-aminoacylated tmRNA acts like a tRNA, entering the A-site of stalled ribosomes, displacing the stalled mRNA. The ribosome then switches to translate the ORF on the tmRNA; the nascent peptide is terminated with the 'tag peptide' encoded by the tmRNA and targeted for degradation. The ribosome is freed to recommence translation, which seems to be the essential function of trans-translation. The polypeptide is SsrA-binding protein (Nocardioides sp. (strain ATCC BAA-499 / JS614)).